Consider the following 209-residue polypeptide: MTQVFGENGELIPVTVVEAKENVVLQKKTVEVDGYNAIQVGFEDKKAYKKDAKSNKYANKPAEGHAKKADAAPKRFIREFRNVDVDAYEVGQEVSVDTFVAGDVIDVTGVSKGKGFQGAIKRHGQSRGPMSHGSHFHRAPGSVGMASDASRVFKGQKMPGRMGGNTVTVQNLEVVQVDTENKVILVKGNVPGPKKGLVEIRTSIKKGNK.

Residues 119–145 are disordered; that stretch reads AIKRHGQSRGPMSHGSHFHRAPGSVGM.

It belongs to the universal ribosomal protein uL3 family. As to quaternary structure, part of the 50S ribosomal subunit. Forms a cluster with proteins L14 and L19.

In terms of biological role, one of the primary rRNA binding proteins, it binds directly near the 3'-end of the 23S rRNA, where it nucleates assembly of the 50S subunit. The protein is Large ribosomal subunit protein uL3 of Staphylococcus aureus (strain COL).